A 188-amino-acid polypeptide reads, in one-letter code: NADH-quinone oxidoreductase subunit I 2 (188 aa).

2 4Fe-4S ferredoxin-type domains span residues 56 to 88 (HFLKRDEEGEIKCVACELCARICPCDCIEVVPY) and 98 to 127 (AKFEIDTARCLFCGLCEDACPADAIALGQQ). Residues Cys68, Cys71, Cys74, Cys78, Cys107, Cys110, Cys113, and Cys117 each coordinate [4Fe-4S] cluster.

The protein belongs to the complex I 23 kDa subunit family. As to quaternary structure, NDH-1 is composed of 14 different subunits. Subunits NuoA, H, J, K, L, M, N constitute the membrane sector of the complex. The cofactor is [4Fe-4S] cluster.

The protein resides in the cell inner membrane. The catalysed reaction is a quinone + NADH + 5 H(+)(in) = a quinol + NAD(+) + 4 H(+)(out). NDH-1 shuttles electrons from NADH, via FMN and iron-sulfur (Fe-S) centers, to quinones in the respiratory chain. The immediate electron acceptor for the enzyme in this species is believed to be ubiquinone. Couples the redox reaction to proton translocation (for every two electrons transferred, four hydrogen ions are translocated across the cytoplasmic membrane), and thus conserves the redox energy in a proton gradient. The polypeptide is NADH-quinone oxidoreductase subunit I 2 (Rhizobium etli (strain ATCC 51251 / DSM 11541 / JCM 21823 / NBRC 15573 / CFN 42)).